The chain runs to 89 residues: Small ribosomal subunit protein uS15 (89 aa).

Belongs to the universal ribosomal protein uS15 family. In terms of assembly, part of the 30S ribosomal subunit. Forms a bridge to the 50S subunit in the 70S ribosome, contacting the 23S rRNA.

In terms of biological role, one of the primary rRNA binding proteins, it binds directly to 16S rRNA where it helps nucleate assembly of the platform of the 30S subunit by binding and bridging several RNA helices of the 16S rRNA. Its function is as follows. Forms an intersubunit bridge (bridge B4) with the 23S rRNA of the 50S subunit in the ribosome. The chain is Small ribosomal subunit protein uS15 from Leifsonia xyli subsp. xyli (strain CTCB07).